The primary structure comprises 207 residues: Thymidylate kinase (207 aa).

7–14 (GCEGTGKT) serves as a coordination point for ATP.

This sequence belongs to the thymidylate kinase family.

The catalysed reaction is dTMP + ATP = dTDP + ADP. In terms of biological role, phosphorylation of dTMP to form dTDP in both de novo and salvage pathways of dTTP synthesis. In Aster yellows witches'-broom phytoplasma (strain AYWB), this protein is Thymidylate kinase.